Consider the following 621-residue polypeptide: Chaperone protein DnaK (621 aa).

Thr-175 bears the Phosphothreonine; by autocatalysis mark. Residues 499–516 show a composition bias toward basic and acidic residues; that stretch reads EAHEADDKKRKEDAETRN. Disordered stretches follow at residues 499–520 and 583–621; these read EAHE…NAEN and AQQG…KDNK. Over residues 583–602 the composition is skewed to low complexity; it reads AQQGAEGAAGAADSGSANNG. The span at 603-621 shows a compositional bias: acidic residues; sequence GDDDVVDAEVVDDDDKDNK.

The protein belongs to the heat shock protein 70 family.

Functionally, acts as a chaperone. The polypeptide is Chaperone protein DnaK (Bifidobacterium animalis subsp. lactis (strain AD011)).